Here is a 338-residue protein sequence, read N- to C-terminus: Citramalyl-CoA lyase, mitochondrial (338 aa).

The N-terminal 20 residues, 1–20, are a transit peptide targeting the mitochondrion; the sequence is MALCVLQNAVRGAAALPRLK. Residues Tyr-48, Lys-55, and Lys-59 each coordinate substrate. Residues Lys-55, Lys-59, and Lys-64 each carry the N6-acetyllysine modification. N6-acetyllysine; alternate is present on residues Lys-80 and Lys-90. N6-succinyllysine; alternate is present on residues Lys-80 and Lys-90. Residue Arg-105 participates in substrate binding. Residues Glu-169 and Asp-204 each contribute to the Mg(2+) site. 270-271 contributes to the substrate binding site; the sequence is IH. An N6-succinyllysine modification is found at Lys-307. The active site involves Asp-318.

The protein belongs to the HpcH/HpaI aldolase family. Citrate lyase beta subunit-like subfamily. As to quaternary structure, homotrimer. The cofactor is Mg(2+).

It localises to the mitochondrion. The catalysed reaction is glyoxylate + acetyl-CoA + H2O = (S)-malate + CoA + H(+). It carries out the reaction propanoyl-CoA + glyoxylate + H2O = 3-methylmalate + CoA + H(+). The enzyme catalyses (3S)-citramalyl-CoA = pyruvate + acetyl-CoA. It catalyses the reaction (S)-malyl-CoA + H2O = (S)-malate + CoA + H(+). In terms of biological role, mitochondrial citramalyl-CoA lyase indirectly involved in the vitamin B12 metabolism. Converts citramalyl-CoA into acetyl-CoA and pyruvate in the C5-dicarboxylate catabolism pathway. The C5-dicarboxylate catabolism pathway is required to detoxify itaconate, a vitamin B12-poisoning metabolite. Also acts as a malate synthase in vitro, converting glyoxylate and acetyl-CoA to malate. Also displays malyl-CoA thioesterase activity. Also acts as a beta-methylmalate synthase in vitro, by mediating conversion of glyoxylate and propionyl-CoA to beta-methylmalate. Also has very weak citramalate synthase activity in vitro. This chain is Citramalyl-CoA lyase, mitochondrial (Clybl), found in Rattus norvegicus (Rat).